We begin with the raw amino-acid sequence, 465 residues long: Calcitonin gene-related peptide type 1 receptor (465 aa).

The N-terminal stretch at 1 to 17 (MVICLLLCTPTDIFVVA) is a signal peptide. Residues 18–141 (SPEVNETQEY…HTNEGRMTAM (124 aa)) are Extracellular-facing. N-linked (GlcNAc...) asparagine glycosylation is found at asparagine 22, asparagine 68, asparagine 120, and asparagine 125. Disulfide bonds link cysteine 50–cysteine 76, cysteine 67–cysteine 107, and cysteine 90–cysteine 129. A helical transmembrane segment spans residues 142 to 166 (NLFYLALIGHGLSLTSLLISLGIFF). Topologically, residues 167-177 (YFKSLSCQRIT) are cytoplasmic. A helical membrane pass occupies residues 178–200 (LHKNLFFSFVLNSVITIIWLTAV). Residues 201 to 211 (ANNQELVQRNP) are Extracellular-facing. Residues 212–240 (TSCKVSQFIHLYLFGCNYFWMLCEGIYLH) traverse the membrane as a helical segment. Residues 241-254 (TLIVVAVFAEKQHL) lie on the Cytoplasmic side of the membrane. The chain crosses the membrane as a helical span at residues 255–275 (MWYYLLGWGFPLIPASIHAIA). Residues 276–291 (RSYYYNDNCWISSNTS) lie on the Extracellular side of the membrane. N-linked (GlcNAc...) asparagine glycosylation is present at asparagine 289. A helical membrane pass occupies residues 292–316 (LLYIIHGPICAALLVNLFFLLNIVR). The Cytoplasmic segment spans residues 317–331 (VLITKLKVTHQAESS). A helical transmembrane segment spans residues 332–353 (LYMKAVRATLILVPLLGIQYVL). At 354 to 368 (LPYKPEGRVSSEIYD) the chain is on the extracellular side. A helical transmembrane segment spans residues 369-389 (YIMHILMHYQGLLVATIFCFF). Over 390–465 (NGEVQGVLRR…SILKSENPFT (76 aa)) the chain is Cytoplasmic.

Belongs to the G-protein coupled receptor 2 family.

It localises to the cell membrane. Functionally, may function as G protein-coupled receptor for calcitonin-gene-related peptides and adrenomedullin. Specificity may be modulated by accessory proteins. May activate cAMP-dependent pathway. The chain is Calcitonin gene-related peptide type 1 receptor (calcrl) from Oncorhynchus gorbuscha (Pink salmon).